The chain runs to 292 residues: Protein SETSIP (292 aa).

Residues 1–11 are compositionally biased toward low complexity; the sequence is MAPKRQSPLPL. Disordered stretches follow at residues 1-43 and 158-292; these read MAPK…EQQE and LNES…GEDD. Residues 35-78 are a coiled coil; that stretch reads KKGEKEQQEAIEHIDEVQNEIDRLNEQDSEEILKVEQKYNKLRQ. A compositionally biased stretch (acidic residues) spans 237 to 292; it reads DMDDEEGGEDDDDDDDDGDEGEEELEDIDEGDEDEGEEDEDDDEGEEGEEDEGEDD.

The protein belongs to the nucleosome assembly protein (NAP) family. Expressed in endothelial cell (EC) and protein-induced pluripotent stem (PiPS) endothelial cell (EC) (at protein level).

The protein resides in the cytoplasm. It localises to the nucleus. In terms of biological role, plays a role as a transcriptional activator involved in the early stage of somatic cell reprogramming. Promotes the differentiation of protein-induced pluripotent stem (PiPS) cells into endothelial cells and the formation of vascular-like tubes (in vitro). Involved in the transcription induction of vascular endothelial-cadherin (VE-cadherin) expression. Associates to the VE-cadherin gene promoter. In Homo sapiens (Human), this protein is Protein SETSIP (SETSIP).